The sequence spans 308 residues: tRNA-cytidine(32) 2-sulfurtransferase (308 aa).

Positions 39–44 (SGGKDS) match the PP-loop motif motif. [4Fe-4S] cluster contacts are provided by cysteine 114, cysteine 117, and cysteine 205.

Belongs to the TtcA family. In terms of assembly, homodimer. Requires Mg(2+) as cofactor. The cofactor is [4Fe-4S] cluster.

Its subcellular location is the cytoplasm. It catalyses the reaction cytidine(32) in tRNA + S-sulfanyl-L-cysteinyl-[cysteine desulfurase] + AH2 + ATP = 2-thiocytidine(32) in tRNA + L-cysteinyl-[cysteine desulfurase] + A + AMP + diphosphate + H(+). Its pathway is tRNA modification. Catalyzes the ATP-dependent 2-thiolation of cytidine in position 32 of tRNA, to form 2-thiocytidine (s(2)C32). The sulfur atoms are provided by the cysteine/cysteine desulfurase (IscS) system. The protein is tRNA-cytidine(32) 2-sulfurtransferase of Cupriavidus taiwanensis (strain DSM 17343 / BCRC 17206 / CCUG 44338 / CIP 107171 / LMG 19424 / R1) (Ralstonia taiwanensis (strain LMG 19424)).